Here is a 141-residue protein sequence, read N- to C-terminus: ATP synthase epsilon chain (141 aa).

It belongs to the ATPase epsilon chain family. F-type ATPases have 2 components, CF(1) - the catalytic core - and CF(0) - the membrane proton channel. CF(1) has five subunits: alpha(3), beta(3), gamma(1), delta(1), epsilon(1). CF(0) has three main subunits: a, b and c.

The protein resides in the cell inner membrane. In terms of biological role, produces ATP from ADP in the presence of a proton gradient across the membrane. The sequence is that of ATP synthase epsilon chain from Pseudomonas savastanoi pv. phaseolicola (strain 1448A / Race 6) (Pseudomonas syringae pv. phaseolicola (strain 1448A / Race 6)).